Reading from the N-terminus, the 295-residue chain is Ribose-phosphate pyrophosphokinase (295 aa).

Residues 46-48 (DGE) and 101-102 (RQ) contribute to the ATP site. Mg(2+) is bound by residues H132 and D171. K194 is a catalytic residue. D-ribose 5-phosphate is bound by residues R196 and D220.

The protein belongs to the ribose-phosphate pyrophosphokinase family. Class III (archaeal) subfamily. It depends on Mg(2+) as a cofactor.

The protein localises to the cytoplasm. The catalysed reaction is D-ribose 5-phosphate + ATP = 5-phospho-alpha-D-ribose 1-diphosphate + AMP + H(+). Its pathway is metabolic intermediate biosynthesis; 5-phospho-alpha-D-ribose 1-diphosphate biosynthesis; 5-phospho-alpha-D-ribose 1-diphosphate from D-ribose 5-phosphate (route I): step 1/1. Its function is as follows. Involved in the biosynthesis of the central metabolite phospho-alpha-D-ribosyl-1-pyrophosphate (PRPP) via the transfer of pyrophosphoryl group from ATP to 1-hydroxyl of ribose-5-phosphate (Rib-5-P). The polypeptide is Ribose-phosphate pyrophosphokinase (Methanosarcina mazei (strain ATCC BAA-159 / DSM 3647 / Goe1 / Go1 / JCM 11833 / OCM 88) (Methanosarcina frisia)).